Reading from the N-terminus, the 517-residue chain is Ovoinhibitor (517 aa).

7 Kazal-like domains span residues 67 to 132 (FGIE…ECRP), 133 to 197 (KHVT…ECKL), 198 to 263 (EIGS…KCRQ), 264 to 329 (EIPE…RCKE), 330 to 394 (RSTP…RCRE), 395 to 460 (EVPE…RCEE), and 461 to 517 (DITK…MAAC). Asparagine 72 carries N-linked (GlcNAc...) asparagine glycosylation. 21 disulfide bridges follow: cysteine 73-cysteine 112, cysteine 90-cysteine 109, cysteine 98-cysteine 130, cysteine 139-cysteine 177, cysteine 155-cysteine 174, cysteine 163-cysteine 195, cysteine 204-cysteine 243, cysteine 221-cysteine 240, cysteine 229-cysteine 261, cysteine 270-cysteine 309, cysteine 287-cysteine 306, cysteine 295-cysteine 327, cysteine 336-cysteine 374, cysteine 352-cysteine 371, cysteine 360-cysteine 392, cysteine 401-cysteine 440, cysteine 418-cysteine 437, cysteine 426-cysteine 458, cysteine 467-cysteine 499, cysteine 477-cysteine 496, and cysteine 485-cysteine 517. N-linked (GlcNAc...) asparagine glycosylation is present at asparagine 186. Asparagine 506 carries N-linked (GlcNAc...) asparagine glycosylation.

In terms of processing, glycosylated. Expressed in oviduct (at protein level). Expressed in egg white (at protein level). Expressed in egg yolk plasma of non-fertilized eggs (at protein level). Expressed in the magnum of the oviduct (at protein level). Expressed in oviduct. Expressed in liver. Expressed in the cortico-medullary border region of the bursa of Fabricius by the bursal secretory dendritic-like cells. Highly expressed in the magnum of the oviduct, and at a lower level in uterus. Weakly expressed in white isthmus and very weakly in infundibulum. Not expressed in duodenum and kidney.

The protein localises to the secreted. In terms of biological role, serine protease inhibitor involved in antimicrobial egg defense preventing contamination of table eggs (non-fertilized eggs) and protecting the chick embryo (fertilized eggs). Inhibits trypsin, chymotrypsin, elastase, subtilisin and a proteinase of fungus Aspergillus oryzae. Inhibits calcium-activated potassium channels KCNMA1 (bovine) and slo (Drosophila). Has antibacterial activity against B.thuringiensis LMSA 3.06.004, but not against S.aureus CIP 103 811, P.aeruginosa PAO1, B.cereus ATCC6464 or B.subtilis ATCC 6633. In Gallus gallus (Chicken), this protein is Ovoinhibitor.